We begin with the raw amino-acid sequence, 1651 residues long: Roundabout homolog 1 (1651 aa).

An N-terminal signal peptide occupies residues 1-25; it reads MKWKHVPFLVMISLLSLSPNHLFLA. Topologically, residues 26-897 are extracellular; sequence QLIPDPEDVE…QQISDVVKQP (872 aa). Residues 33–57 are disordered; that stretch reads DVERGNDHGTPIPTSDNDDNSLGYT. Residues 44-56 are compositionally biased toward polar residues; it reads IPTSDNDDNSLGY. 5 Ig-like C2-type domains span residues 68–164, 170–257, 262–346, 351–446, and 455–541; these read PRIV…ASLE, DDFR…AELT, PSFV…ATLT, PHFV…LEVT, and PVIR…AYIE. A disulfide bridge links Cys89 with Cys147. N-linked (GlcNAc...) asparagine glycosylation is present at Asn160. 3 cysteine pairs are disulfide-bonded: Cys191–Cys240, Cys283–Cys330, and Cys372–Cys428. The N-linked (GlcNAc...) asparagine glycan is linked to Asn463. Cys476 and Cys525 are oxidised to a cystine. Fibronectin type-III domains lie at 563-657, 676-773, and 778-874; these read APSK…TQDV, AVLH…TLEE, and PPQG…LDAH. Asn790, Asn820, and Asn827 each carry an N-linked (GlcNAc...) asparagine glycan. Residues 898 to 918 form a helical membrane-spanning segment; that stretch reads AFIAGIGAACWIILMVFSIWL. Residues 919-1651 lie on the Cytoplasmic side of the membrane; the sequence is YRHRKKRNGL…NNEELEETES (733 aa). A Phosphoserine modification is found at Ser940. At Thr948 the chain carries Phosphothreonine. Residue Tyr1038 is modified to Phosphotyrosine; by ABL; in vitro. Ser1055 bears the Phosphoserine mark. 2 positions are modified to phosphotyrosine; by ABL; in vitro: Tyr1073 and Tyr1114. 4 disordered regions span residues 1124–1202, 1224–1337, 1352–1397, and 1420–1651; these read KDYR…SEEY, YLQQ…ADME, EQTP…DGSF, and RRQM…ETES. The segment covering 1137–1146 has biased composition (polar residues); sequence PYNQSYDQNT. Low complexity predominate over residues 1147 to 1163; the sequence is GGSYNSSDRGSSTSGSQ. A compositionally biased stretch (pro residues) spans 1186-1196; sequence LPPPPAHPPPH. Thr1240 carries the post-translational modification Phosphothreonine. Polar residues predominate over residues 1255-1269; sequence YSHQSTATLTPSPQE. Residues 1281 to 1293 are compositionally biased toward basic and acidic residues; it reads ETGHMQHQPDRRR. Pro residues predominate over residues 1296 to 1307; that stretch reads VSPPPPPRPISP. Ser1297 carries the post-translational modification Phosphoserine. Positions 1322–1336 are enriched in acidic residues; it reads MDTDAPEEEEDEADM. Residues 1384–1397 show a composition bias toward low complexity; sequence SSGRSSVSSSDGSF. Residues 1438 to 1451 show a composition bias toward polar residues; sequence PRPTSPVSTDSNMS. The span at 1459–1470 shows a compositional bias: basic residues; that stretch reads RPAKKLKHQPGH. Pro residues predominate over residues 1480 to 1490; sequence LPPPPVPPPAI. Composition is skewed to basic and acidic residues over residues 1516-1541 and 1549-1573; these read ARTDRSSDRKGSSYKGREVLDGRQVV and DPREAQEQQNDGKGRGNKAAKRDLP. Polar residues predominate over residues 1592–1601; that stretch reads FPTSNNPRDP. A compositionally biased stretch (low complexity) spans 1602 to 1614; it reads SSSSSMSSRGSGS. Over residues 1642–1651 the composition is skewed to acidic residues; sequence NNEELEETES.

It belongs to the immunoglobulin superfamily. ROBO family. In terms of assembly, homodimer. Dimerization is mediated by the extracellular domain and is independent of SLIT liganding. Interacts with SLIT1. Interacts with SLIT2. Interacts with FLRT3. Interacts with MYO9B (via Rho-GAP domain). In terms of processing, ubiquitinated. May be deubiquitinated by USP33. Widely expressed, with exception of kidney.

The protein localises to the cell membrane. It localises to the cell projection. Its subcellular location is the axon. It is found in the endoplasmic reticulum-Golgi intermediate compartment membrane. Its function is as follows. Receptor for SLIT1 and SLIT2 that mediates cellular responses to molecular guidance cues in cellular migration, including axonal navigation at the ventral midline of the neural tube and projection of axons to different regions during neuronal development. Interaction with the intracellular domain of FLRT3 mediates axon attraction towards cells expressing NTN1. In axon growth cones, the silencing of the attractive effect of NTN1 by SLIT2 may require the formation of a ROBO1-DCC complex. Plays a role in the regulation of cell migration via its interaction with MYO9B; inhibits MYO9B-mediated stimulation of RHOA GTPase activity, and thereby leads to increased levels of active, GTP-bound RHOA. May be required for lung development. The protein is Roundabout homolog 1 (ROBO1) of Homo sapiens (Human).